Consider the following 288-residue polypeptide: 4-diphosphocytidyl-2-C-methyl-D-erythritol kinase (288 aa).

Lys11 is an active-site residue. Residue 100–110 (PIAAGLGSGSS) coordinates ATP. Asp140 is a catalytic residue.

This sequence belongs to the GHMP kinase family. IspE subfamily.

The catalysed reaction is 4-CDP-2-C-methyl-D-erythritol + ATP = 4-CDP-2-C-methyl-D-erythritol 2-phosphate + ADP + H(+). It functions in the pathway isoprenoid biosynthesis; isopentenyl diphosphate biosynthesis via DXP pathway; isopentenyl diphosphate from 1-deoxy-D-xylulose 5-phosphate: step 3/6. Functionally, catalyzes the phosphorylation of the position 2 hydroxy group of 4-diphosphocytidyl-2C-methyl-D-erythritol. In Wolbachia sp. subsp. Drosophila simulans (strain wRi), this protein is 4-diphosphocytidyl-2-C-methyl-D-erythritol kinase.